The chain runs to 173 residues: Photosystem I assembly protein Ycf3 (173 aa).

TPR repeat units lie at residues A35–P68, G72–Q105, and G120–G153.

Belongs to the Ycf3 family.

The protein resides in the cellular thylakoid membrane. In terms of biological role, essential for the assembly of the photosystem I (PSI) complex. May act as a chaperone-like factor to guide the assembly of the PSI subunits. In Synechococcus sp. (strain WH7803), this protein is Photosystem I assembly protein Ycf3.